A 432-amino-acid polypeptide reads, in one-letter code: MTLWVLGLNHQTAPMELRERASFVGDALPRALDSLRNLPNVNEAALLSTCNRTELYAETTNAQMLLNWLEQHRPGLQNHLYQYSDAAAVRHLFRVATGLDSMVLGESQILGQVKDSWSMARTHGTLGNTLDRLFQHSFSVAKHARTNTRIGTNPVSIASTAVRLAQDAFSPLNESTVLLIGTGETIQLAAKHLSEGRVQRLLIANRTHAKAQMLASQHGGYALPLTELNLHLAEADIIFSATAAPTPIVTQSNVESALHIRKRKPMLLFDLAIPRDIETEVGTLTDAYLYTIDDLERAVEENRRSRREAAETAEAIIELQVKRYMDTLQAHAHQAPLRRLRTFGTTTRDELLTRARQQLANGRPAGEVLEQLAHGLTNRLLHPPTAALREAALANNTELVRAAEQLFPEKPGYHHPTLQTTIVKTDETDPAS.

Substrate contacts are provided by residues 49–52, serine 101, 106–108, and glutamine 112; these read TCNR and ESQ. Cysteine 50 functions as the Nucleophile in the catalytic mechanism. 181 to 186 provides a ligand contact to NADP(+); the sequence is GTGETI.

The protein belongs to the glutamyl-tRNA reductase family. As to quaternary structure, homodimer.

It carries out the reaction (S)-4-amino-5-oxopentanoate + tRNA(Glu) + NADP(+) = L-glutamyl-tRNA(Glu) + NADPH + H(+). The protein operates within porphyrin-containing compound metabolism; protoporphyrin-IX biosynthesis; 5-aminolevulinate from L-glutamyl-tRNA(Glu): step 1/2. Functionally, catalyzes the NADPH-dependent reduction of glutamyl-tRNA(Glu) to glutamate 1-semialdehyde (GSA). This is Glutamyl-tRNA reductase from Xylella fastidiosa (strain M12).